The sequence spans 68 residues: Beta-toxin Im-2 (68 aa).

The 67-residue stretch at K1–K67 folds into the LCN-type CS-alpha/beta domain. 4 cysteine pairs are disulfide-bonded: C15–C66, C19–C40, C26–C47, and C30–C49.

It belongs to the long (4 C-C) scorpion toxin superfamily. Sodium channel inhibitor family. Beta subfamily. In terms of tissue distribution, expressed by the venom gland.

The protein resides in the secreted. Beta toxins bind voltage-independently at site-4 of sodium channels (Nav) and shift the voltage of activation toward more negative potentials thereby affecting sodium channel activation and promoting spontaneous and repetitive firing. Is toxic to both insect and mammals. Induces paralysis in Acheta domestica crickets, but does not induce death, whereas intracerebroventricular injection into mice causes immediate death (at a dose of 0.05 ug/g). The chain is Beta-toxin Im-2 from Isometrus maculatus (Lesser brown scorpion).